A 657-amino-acid chain; its full sequence is Cyclic-di-AMP phosphodiesterase PdeA (657 aa).

The next 2 helical transmembrane spans lie at 13-35 and 37-53; these read PLYGLIAATIILSVITFFFSWWL and ALVVVGGIILTVAMFYF. The tract at residues 74 to 137 is PAS-like; the sequence is RSEEEALVEM…ITGNDEKGIM (64 aa). A GGDEF domain is found at 175–303; that stretch reads NKSVFAVIFL…GGDQVVIKQP (129 aa). The segment at 342–498 is DHH; that stretch reads VFVMGHRYPD…IEATALLSGI (157 aa). Mn(2+) contacts are provided by His347, Asp351, Asp353, Asp422, His446, and Asp501. The DHHA1 stretch occupies residues 592-645; it reads VITLRPDKLIGISARSLGQINVQVIMEKLGGGGHLSNAATQLKDVTIAEAEKQL.

It belongs to the GdpP/PdeA phosphodiesterase family. The cofactor is heme b. Mn(2+) serves as cofactor.

The protein localises to the cell membrane. It carries out the reaction 3',3'-c-di-AMP + H2O = 5'-O-phosphonoadenylyl-(3'-&gt;5')-adenosine + H(+). In terms of biological role, has phosphodiesterase (PDE) activity against cyclic-di-AMP (c-di-AMP). Overexpression decreases export of c-di-AMP, leads to slightly increased susceptibility to the antibiotic cefuroxime and somewhat slower growth in macrophages. There are at least 2 PDEs for c-di-AMP in this bacteria (this one and pgpH); this may be the major PDE for intracellular growth in host macrophages. During host infection c-di-AMP is secreted into the host cytoplasm which leads to interferon-beta production and secretion by the host. c-di-AMP is a second messenger that mediates growth, cell wall stability and virulence. May monitor cellular heme or NO levels. The protein is Cyclic-di-AMP phosphodiesterase PdeA of Listeria monocytogenes serotype 1/2a (strain 10403S).